A 169-amino-acid polypeptide reads, in one-letter code: Cell division inhibitor SulA (169 aa).

The interval 106 to 112 (ALRTGNY) is ftsZ binding. A lon protease binding region spans residues 162-169 (KIHSNLYH).

The protein belongs to the SulA family. In terms of assembly, interacts with FtsZ. Post-translationally, is rapidly cleaved and degraded by the Lon protease once DNA damage is repaired.

In terms of biological role, component of the SOS system and an inhibitor of cell division. Accumulation of SulA causes rapid cessation of cell division and the appearance of long, non-septate filaments. In the presence of GTP, binds a polymerization-competent form of FtsZ in a 1:1 ratio, thus inhibiting FtsZ polymerization and therefore preventing it from participating in the assembly of the Z ring. This mechanism prevents the premature segregation of damaged DNA to daughter cells during cell division. The sequence is that of Cell division inhibitor SulA from Shigella boydii serotype 18 (strain CDC 3083-94 / BS512).